We begin with the raw amino-acid sequence, 159 residues long: 3-hydroxyacyl-[acyl-carrier-protein] dehydratase FabZ (159 aa).

The active site involves H58.

Belongs to the thioester dehydratase family. FabZ subfamily.

It is found in the cytoplasm. It catalyses the reaction a (3R)-hydroxyacyl-[ACP] = a (2E)-enoyl-[ACP] + H2O. In terms of biological role, involved in unsaturated fatty acids biosynthesis. Catalyzes the dehydration of short chain beta-hydroxyacyl-ACPs and long chain saturated and unsaturated beta-hydroxyacyl-ACPs. The protein is 3-hydroxyacyl-[acyl-carrier-protein] dehydratase FabZ of Helicobacter pylori (strain J99 / ATCC 700824) (Campylobacter pylori J99).